Reading from the N-terminus, the 800-residue chain is Phenylalanine--tRNA ligase beta subunit (800 aa).

The region spanning 39-147 is the tRNA-binding domain; the sequence is FDAIADIVVG…QDSVPGVRLV (109 aa). One can recognise a B5 domain in the interval 401-477; it reads WQAAQLRFRP…RVYGMDNIPP (77 aa). Residues Asp-455, Asp-461, Glu-464, and Glu-465 each coordinate Mg(2+). The 95-residue stretch at 706–800 folds into the FDX-ACB domain; sequence PVFPPVKRDI…SLTEALGVRI (95 aa).

This sequence belongs to the phenylalanyl-tRNA synthetase beta subunit family. Type 1 subfamily. Tetramer of two alpha and two beta subunits. It depends on Mg(2+) as a cofactor.

The protein resides in the cytoplasm. The enzyme catalyses tRNA(Phe) + L-phenylalanine + ATP = L-phenylalanyl-tRNA(Phe) + AMP + diphosphate + H(+). The polypeptide is Phenylalanine--tRNA ligase beta subunit (Oleidesulfovibrio alaskensis (strain ATCC BAA-1058 / DSM 17464 / G20) (Desulfovibrio alaskensis)).